A 188-amino-acid chain; its full sequence is ATP synthase subunit delta (188 aa).

Belongs to the ATPase delta chain family. As to quaternary structure, F-type ATPases have 2 components, F(1) - the catalytic core - and F(0) - the membrane proton channel. F(1) has five subunits: alpha(3), beta(3), gamma(1), delta(1), epsilon(1). F(0) has three main subunits: a(1), b(2) and c(10-14). The alpha and beta chains form an alternating ring which encloses part of the gamma chain. F(1) is attached to F(0) by a central stalk formed by the gamma and epsilon chains, while a peripheral stalk is formed by the delta and b chains.

The protein localises to the cell inner membrane. F(1)F(0) ATP synthase produces ATP from ADP in the presence of a proton or sodium gradient. F-type ATPases consist of two structural domains, F(1) containing the extramembraneous catalytic core and F(0) containing the membrane proton channel, linked together by a central stalk and a peripheral stalk. During catalysis, ATP synthesis in the catalytic domain of F(1) is coupled via a rotary mechanism of the central stalk subunits to proton translocation. Functionally, this protein is part of the stalk that links CF(0) to CF(1). It either transmits conformational changes from CF(0) to CF(1) or is implicated in proton conduction. The polypeptide is ATP synthase subunit delta (Sinorhizobium fredii (strain NBRC 101917 / NGR234)).